The following is a 775-amino-acid chain: Semaphorin-3E (775 aa).

A signal peptide spans 1-25 (MASAGHIITLLLWGYLLELWTGGHT). Residues 32-516 (RLRLSHKELL…SASAVAQVRF (485 aa)) form the Sema domain. Residue Asn44 is glycosylated (N-linked (GlcNAc...) asparagine). A disulfide bridge links Cys105 with Cys115. Asn126 carries an N-linked (GlcNAc...) asparagine glycan. 4 cysteine pairs are disulfide-bonded: Cys133–Cys142, Cys270–Cys382, Cys294–Cys342, and Cys519–Cys537. Asn330 carries an N-linked (GlcNAc...) asparagine glycan. Residues 581–669 (ALDKTEEHLA…SFVHTVRKIT (89 aa)) enclose the Ig-like C2-type domain. Asn595 and Asn596 each carry an N-linked (GlcNAc...) asparagine glycan. Cys654 and Cys729 are disulfide-bonded. The tract at residues 742–775 (LKMSPSKWKYANPQEKKLRSKPEHYRLPRHTLDS) is disordered. Over residues 755–775 (QEKKLRSKPEHYRLPRHTLDS) the composition is skewed to basic and acidic residues.

This sequence belongs to the semaphorin family. As to quaternary structure, interacts with PLXND1.

The protein resides in the secreted. Functionally, plays an important role in signaling via the cell surface receptor PLXND1. Mediates reorganization of the actin cytoskeleton, leading to the retraction of cell projections. Promotes focal adhesion disassembly and inhibits adhesion of endothelial cells to the extracellular matrix. Regulates angiogenesis, both during embryogenesis and after birth. Can down-regulate sprouting angiogenesis. Required for normal vascular patterning during embryogenesis. Plays an important role in ensuring the specificity of synapse formation. This Homo sapiens (Human) protein is Semaphorin-3E (SEMA3E).